Consider the following 231-residue polypeptide: Small ribosomal subunit protein uS3 (231 aa).

The KH type-2 domain occupies 18-97; sequence VDEYLAKQFY…NPELNARVMA (80 aa).

This sequence belongs to the universal ribosomal protein uS3 family. As to quaternary structure, part of the 30S ribosomal subunit.

In terms of biological role, binds the lower part of the 30S subunit head. In Sulfolobus acidocaldarius (strain ATCC 33909 / DSM 639 / JCM 8929 / NBRC 15157 / NCIMB 11770), this protein is Small ribosomal subunit protein uS3.